A 287-amino-acid polypeptide reads, in one-letter code: Iodotyrosine deiodinase (287 aa).

A helical membrane pass occupies residues 15-34 (HWPSLFITLALIWIVKRLFF). Residues 96–100 (RRSIR), Ser125, and 125–126 (SG) contribute to the FMN site. 3,5-diiodo-L-tyrosine is bound by residues Ala127, Glu154, Tyr158, and Lys179. 3-iodo-L-tyrosine-binding residues include Ala127, Glu154, Tyr158, and Lys179. Residues 235–237 (VTT) and Arg277 contribute to the FMN site.

Belongs to the nitroreductase family. As to quaternary structure, homodimer. FMN is required as a cofactor. As to expression, expressed in spermatocytes.

It is found in the cell membrane. The enzyme catalyses 2 iodide + L-tyrosine + 2 NADP(+) = 3,5-diiodo-L-tyrosine + 2 NADPH + H(+). It carries out the reaction iodide + L-tyrosine + NADP(+) = 3-iodo-L-tyrosine + NADPH. The catalysed reaction is 3-iodo-L-tyrosine + iodide + NADP(+) = 3,5-diiodo-L-tyrosine + NADPH + H(+). It catalyses the reaction L-tyrosine + chloride + NADP(+) = 3-chloro-L-tyrosine + NADPH. The enzyme catalyses bromide + L-tyrosine + NADP(+) = 3-bromo-L-tyrosine + NADPH. Catalyzes the dehalogenation of halotyrosines such as 3-bromo-L-tyrosine, 3-chloro-L-tyrosine, 3-iodo-L-tyrosine and 3,5-diiodo-L-tyrosine. Activity towards 3-fluoro-L-tyrosine is weak. Important for male and female fertility. May be involved in maintaining the viability of sperm, both during development in the testes and storage in the female spermatheca. The chain is Iodotyrosine deiodinase from Drosophila melanogaster (Fruit fly).